The following is an 815-amino-acid chain: Subtilisin-like protease SBT2.5 (815 aa).

Residues 1-19 form the signal peptide; that stretch reads MDIGLRIFVVFVLLVAVTA. One can recognise an Inhibitor I9 domain in the interval 21–124; that stretch reads VYIVTMEGDP…RSVDKDWKVR (104 aa). A Peptidase S8 domain is found at 120–671; it reads DWKVRRLTTH…SGHVNPSAAL (552 aa). Active-site charge relay system residues include aspartate 160 and histidine 234. Residues 397 to 501 form the PA domain; the sequence is TLVSANDVLL…VSKSMDLIDY (105 aa). 2 N-linked (GlcNAc...) asparagine glycosylation sites follow: asparagine 503 and asparagine 577. Residue serine 596 is the Charge relay system of the active site. N-linked (GlcNAc...) asparagine glycosylation is present at asparagine 701.

This sequence belongs to the peptidase S8 family. As to expression, expressed in roots, leaves and flowers of mature plants.

The protein is Subtilisin-like protease SBT2.5 of Arabidopsis thaliana (Mouse-ear cress).